A 79-amino-acid polypeptide reads, in one-letter code: Putative antitoxin MM_2475 (79 aa).

This sequence belongs to the UPF0330 family.

Functionally, possibly the antitoxin component of a type II toxin-antitoxin (TA) system. The protein is Putative antitoxin MM_2475 of Methanosarcina mazei (strain ATCC BAA-159 / DSM 3647 / Goe1 / Go1 / JCM 11833 / OCM 88) (Methanosarcina frisia).